A 360-amino-acid chain; its full sequence is Cyclin-D1-binding protein 1 (360 aa).

An N-acetylalanine modification is found at alanine 2. Interaction with TCF3 regions lie at residues 2 to 184 and 150 to 360; these read ASAT…VDFV and ISYN…ELEL. Interaction with RPLP0 stretches follow at residues 2–190 and 240–360; these read ASAT…AHEE and LIIP…ELEL. A required for interaction with CCND1 region spans residues 2–208; that stretch reads ASATAPAAAV…DPYSGLLNDT (207 aa).

Belongs to the CCNDBP1 family. Interacts with CCND1 and GRAP2. May also interact with COPS5, RPLP0, SIRT6, SYF2 and TCF3. In terms of processing, phosphorylated. In terms of tissue distribution, ubiquitously expressed. Expression is down-regulated in a variety of tumor types including breast, colon, prostate and rectal tumors, and is up-regulated in certain hepatic carcinomas.

The protein localises to the cytoplasm. It is found in the nucleus. May negatively regulate cell cycle progression. May act at least in part via inhibition of the cyclin-D1/CDK4 complex, thereby preventing phosphorylation of RB1 and blocking E2F-dependent transcription. The sequence is that of Cyclin-D1-binding protein 1 (CCNDBP1) from Homo sapiens (Human).